The primary structure comprises 429 residues: Gamma-glutamyl phosphate reductase (429 aa).

It belongs to the gamma-glutamyl phosphate reductase family.

The protein resides in the cytoplasm. The enzyme catalyses L-glutamate 5-semialdehyde + phosphate + NADP(+) = L-glutamyl 5-phosphate + NADPH + H(+). It functions in the pathway amino-acid biosynthesis; L-proline biosynthesis; L-glutamate 5-semialdehyde from L-glutamate: step 2/2. Its function is as follows. Catalyzes the NADPH-dependent reduction of L-glutamate 5-phosphate into L-glutamate 5-semialdehyde and phosphate. The product spontaneously undergoes cyclization to form 1-pyrroline-5-carboxylate. This Methylocella silvestris (strain DSM 15510 / CIP 108128 / LMG 27833 / NCIMB 13906 / BL2) protein is Gamma-glutamyl phosphate reductase.